The chain runs to 1616 residues: Protein Shroom2 (1616 aa).

One can recognise a PDZ domain in the interval 26–108 (LVEVQLSGGA…TLKLVVKRRS (83 aa)). Disordered stretches follow at residues 128 to 159 (ELAA…LSSS) and 183 to 229 (HPSS…KADT). Low complexity predominate over residues 150–159 (SSSSHDLSSS). Polar residues-rich tracts occupy residues 186–197 (SRLSVAKSNSSI) and 220–229 (PDHTLSKADT). Residue serine 231 is modified to Phosphoserine. Residues 247–259 (QGGRQAQAAGDPQ) are compositionally biased toward low complexity. Disordered regions lie at residues 247-475 (QGGR…SGWQ), 502-678 (GALE…PLAG), 695-790 (TSFK…SEDT), 802-869 (EETS…LPRR), 881-1100 (KEQR…PSPA), 1115-1184 (PSVF…LTDK), 1268-1302 (AEPE…PGLS), and 1363-1389 (QRRK…VPAA). Residues 312-321 (SSPPPPPPPL) show a composition bias toward pro residues. A phosphoserine mark is found at serine 313 and serine 325. The segment covering 343-356 (AAAAQHFTALAQAQ) has biased composition (low complexity). The segment covering 358–370 (RGDRRPELTDRPW) has biased composition (basic and acidic residues). Over residues 405 to 415 (SSRLQASLSSS) the composition is skewed to low complexity. Phosphoserine is present on serine 413. The ASD1 domain occupies 684-773 (LKEAQARVLR…SEPEKMNEVG (90 aa)). Basic and acidic residues-rich tracts occupy residues 754–770 (FTAE…EKMN) and 821–830 (IPRDKPERPR). The segment covering 842 to 854 (WSRTTSLGDSLNA) has biased composition (polar residues). 5 positions are modified to phosphoserine: serine 851, serine 897, serine 921, serine 922, and serine 924. The residue at position 925 (threonine 925) is a Phosphothreonine. Basic and acidic residues predominate over residues 926–958 (DHYKQEASVELRRQAGDPGEPREELPSAVRAEE). Serine 974 bears the Phosphoserine mark. Polar residues predominate over residues 975-994 (PGSQQHPPSQKAPNPPTFSE). Residues serine 1036 and serine 1039 each carry the phosphoserine modification. A compositionally biased stretch (basic and acidic residues) spans 1068–1077 (PKREPRRYRA). The span at 1159-1176 (LRLQTATMETSRSPSPQF) shows a compositional bias: polar residues. Phosphoserine occurs at positions 1171, 1173, and 1297. Positions 1317–1611 (EELAREIVGK…QLKCLLDSLQ (295 aa)) constitute an ASD2 domain.

This sequence belongs to the shroom family. As to quaternary structure, interacts with F-actin. As to expression, abundant in retina and melanoma; also in brain, placenta, lung, kidney and pancreas.

The protein localises to the apical cell membrane. The protein resides in the cell junction. Its subcellular location is the tight junction. It is found in the cytoplasm. It localises to the cytoskeleton. In terms of biological role, may be involved in endothelial cell morphology changes during cell spreading. In the retinal pigment epithelium, may regulate the biogenesis of melanosomes and promote their association with the apical cell surface by inducing gamma-tubulin redistribution. The polypeptide is Protein Shroom2 (SHROOM2) (Homo sapiens (Human)).